A 236-amino-acid chain; its full sequence is C-&gt;U-editing enzyme APOBEC-1 (236 aa).

The 125-residue stretch at 10 to 134 (KDYTLRRRIE…RRNRQGLKDL (125 aa)) folds into the CMP/dCMP-type deaminase domain. Histidine 61 contacts Zn(2+). Glutamate 63 acts as the Proton donor in catalysis. Zn(2+) contacts are provided by cysteine 93 and cysteine 96.

Belongs to the cytidine and deoxycytidylate deaminase family. Homodimer. Interacts with A1CF; form an mRNA editing complex. Interacts with RBM47; form an mRNA editing complex. Found in a complex with CELF2/CUGBP2 and A1CF. Interacts with HNRPAB. Interacts with SYNCRIP. Zn(2+) is required as a cofactor. As to expression, expressed exclusively in the intestine.

The protein localises to the cytoplasm. The protein resides in the nucleus. It carries out the reaction a cytidine in mRNA + H2O + H(+) = a uridine in mRNA + NH4(+). The enzyme catalyses cytidine(6666) in apoB mRNA + H2O + H(+) = uridine(6666) in apoB mRNA + NH4(+). Functionally, cytidine deaminase catalyzing the cytidine to uridine postranscriptional editing of a variety of mRNAs. Form complexes with cofactors that confer differential editing activity and selectivity. Responsible for the postranscriptional editing of a CAA codon for Gln to a UAA codon for stop in the apolipoprotein B mRNA. Also involved in CGA (Arg) to UGA (Stop) editing in the NF1 mRNA. May also play a role in the epigenetic regulation of gene expression by participating in DNA demethylation. This chain is C-&gt;U-editing enzyme APOBEC-1, found in Oryctolagus cuniculus (Rabbit).